A 736-amino-acid chain; its full sequence is Zinc finger MYND domain-containing protein 15 (736 aa).

2 disordered regions span residues 70-94 (SLGQ…DEPP) and 109-192 (LEDG…KNAE). A compositionally biased stretch (acidic residues) spans 110–123 (EDGEEGEEEEEDEE). Basic and acidic residues-rich tracts occupy residues 124–135 (HGERPGMEKVEP) and 165–185 (ASRE…PEKR). 8 residues coordinate Zn(2+): Cys307, Cys310, Cys322, Cys325, Cys331, Cys335, His349, and Cys353. The MYND-type zinc-finger motif lies at 307–353 (CHVCHKHSFEVKLTPCPQCSAVLYCGEACLQADWRRCPDDVSHRFWC). Disordered stretches follow at residues 556-583 (DGPE…GGRR) and 696-736 (GGTV…RRRR). A compositionally biased stretch (pro residues) spans 704–718 (GPAPRPPTPAAPPVP). Residues 719 to 736 (ARRRRGEKKAARGPRRRR) are compositionally biased toward basic residues.

Interacts with HDAC1, HDAC3, HDAC6 and, to a lesser extent, with HDAC7. In terms of tissue distribution, testis-specific. Expressed in pachytene spermatocytes and all developing spermatids, but not in Sertoli, nor Leydig cells (at protein level).

The protein localises to the nucleus. The protein resides in the cytoplasm. Its function is as follows. Acts as a transcriptional repressor through interaction with histone deacetylases (HDACs). May regulate haploid genes important for spermiogenesis. In Mus musculus (Mouse), this protein is Zinc finger MYND domain-containing protein 15 (Zmynd15).